We begin with the raw amino-acid sequence, 328 residues long: P2Y purinoceptor 3 (328 aa).

Residues methionine 1–valine 22 are Extracellular-facing. Asparagine 5 carries N-linked (GlcNAc...) asparagine glycosylation. The helical transmembrane segment at leucine 23–isoleucine 43 threads the bilayer. Residues glycine 44–threonine 57 lie on the Cytoplasmic side of the membrane. A helical transmembrane segment spans residues isoleucine 58 to isoleucine 78. Over tyrosine 79–phenylalanine 96 the chain is Extracellular. A disulfide bridge links cysteine 94 with cysteine 172. The helical transmembrane segment at valine 97 to valine 117 threads the bilayer. Residues glutamine 118–threonine 139 are Cytoplasmic-facing. Residues tryptophan 140–phenylalanine 160 traverse the membrane as a helical segment. Residues alanine 161–isoleucine 189 lie on the Extracellular side of the membrane. The helical transmembrane segment at threonine 190–methionine 210 threads the bilayer. Residues alanine 211 to lysine 231 are Cytoplasmic-facing. The chain crosses the membrane as a helical span at residues alanine 232 to leucine 252. The Extracellular portion of the chain corresponds to threonine 253–alanine 275. A helical membrane pass occupies residues isoleucine 276–phenylalanine 298. Over threonine 299 to cysteine 323 the chain is Cytoplasmic.

This sequence belongs to the G-protein coupled receptor 1 family.

The protein localises to the cell membrane. Functionally, receptor for extracellular ADP &gt; UTP &gt; ATP = UDP. The activity of this receptor is mediated by G proteins which activate a phosphatidylinositol-calcium second messenger system. This Gallus gallus (Chicken) protein is P2Y purinoceptor 3 (P2RY3).